Here is a 239-residue protein sequence, read N- to C-terminus: Carboxy-S-adenosyl-L-methionine synthase (239 aa).

S-adenosyl-L-methionine-binding positions include tyrosine 35, 64–66 (GSS), 114–115 (DL), asparagine 129, and arginine 196.

Belongs to the class I-like SAM-binding methyltransferase superfamily. Cx-SAM synthase family. As to quaternary structure, homodimer.

It carries out the reaction prephenate + S-adenosyl-L-methionine = carboxy-S-adenosyl-L-methionine + 3-phenylpyruvate + H2O. Functionally, catalyzes the conversion of S-adenosyl-L-methionine (SAM) to carboxy-S-adenosyl-L-methionine (Cx-SAM). The sequence is that of Carboxy-S-adenosyl-L-methionine synthase from Helicobacter hepaticus (strain ATCC 51449 / 3B1).